We begin with the raw amino-acid sequence, 439 residues long: Xylose isomerase (439 aa).

Catalysis depends on residues histidine 101 and aspartate 104. Residues glutamate 232, glutamate 268, histidine 271, aspartate 296, aspartate 307, aspartate 309, and aspartate 339 each coordinate Mg(2+).

It belongs to the xylose isomerase family. Homotetramer. It depends on Mg(2+) as a cofactor.

It localises to the cytoplasm. The catalysed reaction is alpha-D-xylose = alpha-D-xylulofuranose. In Yersinia pseudotuberculosis serotype O:1b (strain IP 31758), this protein is Xylose isomerase.